A 138-amino-acid chain; its full sequence is Large ribosomal subunit protein bL17 (138 aa).

It belongs to the bacterial ribosomal protein bL17 family. In terms of assembly, part of the 50S ribosomal subunit. Contacts protein L32.

In Bradyrhizobium diazoefficiens (strain JCM 10833 / BCRC 13528 / IAM 13628 / NBRC 14792 / USDA 110), this protein is Large ribosomal subunit protein bL17.